A 56-amino-acid polypeptide reads, in one-letter code: Large ribosomal subunit protein bL32 (56 aa).

Residues 1–56 (MAVQQNRKTRSKRGMRRSHDALSAPTLSQDKETGTTHRRHHVAPDGFYRGRKVVDV) form a disordered region. The segment covering 7–16 (RKTRSKRGMR) has biased composition (basic residues).

The protein belongs to the bacterial ribosomal protein bL32 family.

This chain is Large ribosomal subunit protein bL32, found in Chromohalobacter salexigens (strain ATCC BAA-138 / DSM 3043 / CIP 106854 / NCIMB 13768 / 1H11).